The primary structure comprises 189 residues: Early E3 20.5 kDa glycoprotein (189 aa).

N-linked (GlcNAc...) asparagine; by host glycosylation is found at N73 and N137.

The protein belongs to the adenoviridae E3_20 family.

E3 proteins seem to be dispensable for virus growth in tissue culture cells. They are potentially important for virus growth under special conditions; E3 region may help adenoviruses to evade the immune surveillance of the host. The chain is Early E3 20.5 kDa glycoprotein from Human adenovirus B serotype 3 (HAdV-3).